A 559-amino-acid chain; its full sequence is MSGRRGDHPGRMAPTPGRRTRNGSVNGHPGMANYPPDDANYRRSRRPPPMPSANRYLPPLGEQPEPERSRVPPRTTRAGERITVTRAAAMRSREMGSRMYLLVHRAATADGADKSGLTALTWPVMANFAVDSAMAVALANTLFFAAASGESKSRVALYLLITIAPFAVIAPLIGPALDRLQHGRRVALALSFGLRTALAVVLIMNYDGATGSFPSWVLYPCALAMMVFSKSFSVLRSAVTPRVMPPTIDLVRVNSRLTVFGLLGGTIAGGAIAAGVEFVCTHLFQLPGALFVVVAITIAGASLSMRIPRWVEVTSGEVPATLSYHRDRGRLRRRWPEEVKNLGGTLRQPLGRNIITSLWGNCTIKVMVGFLFLYPAFVAKAHEANGWVQLGMLGLIGAAAAVGNFAGNFTSARLQLGRPAVLVVRCTVLVTVLAIAAAVAGSLAATAIATLITAGSSAIAKASLDASLQHDLPEESRASGFGRSESTLQLAWVLGGAVGVLVYTELWVGFTAVSALLILGLAQTIVSFRGDSLIPGLGGNRPVMAEQETTRRGAAVAPQ.

Positions 1–10 (MSGRRGDHPG) are enriched in basic and acidic residues. The disordered stretch occupies residues 1 to 76 (MSGRRGDHPG…ERSRVPPRTT (76 aa)). Transmembrane regions (helical) follow at residues 128-148 (FAVD…AAAS), 155-175 (VALY…LIGP), 186-206 (VALA…IMNY), 208-228 (GATG…MMVF), 259-279 (VFGL…VEFV), 283-303 (LFQL…GASL), 358-378 (LWGN…PAFV), 387-407 (WVQL…NFAG), 428-448 (VLVT…ATAI), 490-510 (LAWV…WVGF), and 515-535 (ALLI…SLIP).

This sequence to M.leprae ML2143.

Its subcellular location is the cell membrane. This is an uncharacterized protein from Mycobacterium tuberculosis (strain CDC 1551 / Oshkosh).